Consider the following 416-residue polypeptide: Isocitrate dehydrogenase [NADP] (416 aa).

Residues 77–79 (TIT) and Arg84 each bind NADP(+). A substrate-binding site is contributed by Thr79. Substrate-binding positions include 96 to 102 (SPNGTIR), Arg111, and Arg134. Asp254 serves as a coordination point for Mn(2+). Lys262 lines the NADP(+) pocket. Asp277 is a binding site for Mn(2+). NADP(+) is bound by residues 312-317 (GTVTRH) and Asn330.

It belongs to the isocitrate and isopropylmalate dehydrogenases family. Heterodimer. The cofactor is Mg(2+). Requires Mn(2+) as cofactor.

The protein resides in the cytoplasm. The enzyme catalyses D-threo-isocitrate + NADP(+) = 2-oxoglutarate + CO2 + NADPH. Functionally, may supply 2-oxoglutarate for amino acid biosynthesis and ammonia assimilation via the glutamine synthetase/glutamate synthase (GS/GOGAT) pathway. This is Isocitrate dehydrogenase [NADP] (ICDH-1) from Solanum tuberosum (Potato).